Reading from the N-terminus, the 60-residue chain is Potassium channel toxin ImKTx88 (60 aa).

The N-terminal stretch at 1 to 22 (MSNFSVFLIALLFCSVFILSEA) is a signal peptide. Disulfide bonds link C30–C51, C36–C56, and C40–C58.

The protein belongs to the short scorpion toxin superfamily. Potassium channel inhibitor family. In terms of tissue distribution, expressed by the venom gland.

Its subcellular location is the secreted. Functionally, recombinant toxin selectively inhibits Kv1.3/KCNA3 potassium channels with an IC(50) of 91 pM. The sequence is that of Potassium channel toxin ImKTx88 from Isometrus maculatus (Lesser brown scorpion).